The sequence spans 183 residues: ATP-dependent protease subunit HslV (183 aa).

Thr2 is an active-site residue. Na(+) contacts are provided by Ala157, Cys160, and Thr163.

The protein belongs to the peptidase T1B family. HslV subfamily. In terms of assembly, a double ring-shaped homohexamer of HslV is capped on each side by a ring-shaped HslU homohexamer. The assembly of the HslU/HslV complex is dependent on binding of ATP.

It localises to the cytoplasm. The catalysed reaction is ATP-dependent cleavage of peptide bonds with broad specificity.. With respect to regulation, allosterically activated by HslU binding. In terms of biological role, protease subunit of a proteasome-like degradation complex believed to be a general protein degrading machinery. The sequence is that of ATP-dependent protease subunit HslV from Marinomonas sp. (strain MWYL1).